Reading from the N-terminus, the 199-residue chain is MNLAEGVQIVSFAILAAMMIGSAIGVVLLENVVYSAFLLGGVFISIAGLYLLLNADFVAAAQVLIYVGAVNVLILFAIMLVNKREAFQPIAKSWIRRAATALVCAGIFALLSAMVLTTPWAISTAVPIESSIITIGLHFFTDFLLPFELASILLLMALVGAIVLARREFLPDEDEADTALTLPERPRELVPAGQNNPEN.

Transmembrane regions (helical) follow at residues 9 to 29 (IVSF…VVLL), 32 to 52 (VVYS…LYLL), 61 to 81 (AQVL…IMLV), 102 to 122 (LVCA…PWAI), and 143 to 163 (FLLP…GAIV).

This sequence belongs to the complex I subunit 6 family.

The protein localises to the membrane. The catalysed reaction is a plastoquinone + NADH + (n+1) H(+)(in) = a plastoquinol + NAD(+) + n H(+)(out). It catalyses the reaction a plastoquinone + NADPH + (n+1) H(+)(in) = a plastoquinol + NADP(+) + n H(+)(out). Functionally, NDH-1 shuttles electrons from NAD(P)H, via FMN and iron-sulfur (Fe-S) centers, to quinones in the respiratory chain. The immediate electron acceptor for the enzyme in this species is believed to be plastoquinone. Couples the redox reaction to proton translocation (for every two electrons transferred, four hydrogen ions are translocated across the cytoplasmic membrane), and thus conserves the redox energy in a proton gradient. In Leptolyngbya boryana (Plectonema boryanum), this protein is NAD(P)H-quinone oxidoreductase chain 6 (ndhG).